The chain runs to 332 residues: Ornithine carbamoyltransferase 1, catabolic (332 aa).

Residues 56-59 (STRT), Q83, R107, and 134-137 (HPTQ) contribute to the carbamoyl phosphate site. Residues N167, D231, and 235–236 (SM) each bind L-ornithine. Carbamoyl phosphate is bound by residues 273–274 (CL) and R318.

Belongs to the aspartate/ornithine carbamoyltransferase superfamily. OTCase family.

Its subcellular location is the cytoplasm. It catalyses the reaction carbamoyl phosphate + L-ornithine = L-citrulline + phosphate + H(+). Its pathway is amino-acid degradation; L-arginine degradation via ADI pathway; carbamoyl phosphate from L-arginine: step 2/2. Its function is as follows. Reversibly catalyzes the transfer of the carbamoyl group from carbamoyl phosphate (CP) to the N(epsilon) atom of ornithine (ORN) to produce L-citrulline. This Streptococcus agalactiae serotype III (strain NEM316) protein is Ornithine carbamoyltransferase 1, catabolic (arcB1).